The following is a 763-amino-acid chain: Phosphoglycerol transferase I (763 aa).

A run of 4 helical transmembrane segments spans residues 1–21 (MSELLSVALFLASVLIYAWKA), 26–46 (WWFAATLTVLGLFVILNITLY), 77–97 (ILPGIGIALALVAVFGALGWI), and 108–128 (VGYSLLALLLALGSVDASPAF).

This sequence belongs to the OpgB family.

The protein localises to the cell inner membrane. It catalyses the reaction a phosphatidylglycerol + a membrane-derived-oligosaccharide D-glucose = a 1,2-diacyl-sn-glycerol + a membrane-derived-oligosaccharide 6-(glycerophospho)-D-glucose.. Its pathway is glycan metabolism; osmoregulated periplasmic glucan (OPG) biosynthesis. Transfers a phosphoglycerol residue from phosphatidylglycerol to the membrane-bound nascent glucan backbones. In Salmonella paratyphi B (strain ATCC BAA-1250 / SPB7), this protein is Phosphoglycerol transferase I.